Here is a 380-residue protein sequence, read N- to C-terminus: Methylthioribose-1-phosphate isomerase (380 aa).

Catalysis depends on Asp-257, which acts as the Proton donor.

This sequence belongs to the eIF-2B alpha/beta/delta subunits family. MtnA subfamily.

It is found in the cytoplasm. It localises to the nucleus. The catalysed reaction is 5-(methylsulfanyl)-alpha-D-ribose 1-phosphate = 5-(methylsulfanyl)-D-ribulose 1-phosphate. It participates in amino-acid biosynthesis; L-methionine biosynthesis via salvage pathway; L-methionine from S-methyl-5-thio-alpha-D-ribose 1-phosphate: step 1/6. In terms of biological role, catalyzes the interconversion of methylthioribose-1-phosphate (MTR-1-P) into methylthioribulose-1-phosphate (MTRu-1-P). The chain is Methylthioribose-1-phosphate isomerase from Naegleria gruberi (Amoeba).